We begin with the raw amino-acid sequence, 183 residues long: Inner membrane-spanning protein YciB (183 aa).

5 consecutive transmembrane segments (helical) span residues 22–44 (VQAA…RILF), 53–73 (IVGL…DLAF), 76–96 (WKVT…QYVF), 121–141 (LGWA…SQLF), and 153–173 (GFTG…YPYI).

Belongs to the YciB family.

It localises to the cell inner membrane. In terms of biological role, plays a role in cell envelope biogenesis, maintenance of cell envelope integrity and membrane homeostasis. The polypeptide is Inner membrane-spanning protein YciB (Haemophilus ducreyi (strain 35000HP / ATCC 700724)).